The chain runs to 413 residues: Docking protein 2 (413 aa).

The 111-residue stretch at 4–114 folds into the PH domain; that stretch reads VVVKQGFLYL…WIQAICLLAF (111 aa). The region spanning 147 to 252 is the IRS-type PTB domain; it reads PQKEFAVTVR…SAQKNAAPPG (106 aa). Residues 247-292 form a disordered region; sequence NAAPPGPQTQPVPVPAVLPRPESPYARPHDSLPPPSPTVPVPTPRQ. Positions 250–268 are enriched in pro residues; it reads PPGPQTQPVPVPAVLPRPE. A Phosphotyrosine modification is found at Tyr271. Positions 277 to 289 are enriched in pro residues; it reads SLPPPSPTVPVPT. A phosphotyrosine mark is found at Tyr300 and Tyr346. The span at 362 to 381 shows a compositional bias: basic and acidic residues; sequence QEPRGEAWRRQATADRDSSG. A disordered region spans residues 362–383; sequence QEPRGEAWRRQATADRDSSGLK.

The protein belongs to the DOK family. Type A subfamily. Interacts with phosphorylated RASGAP and EGFR. Interacts with RET and NCK. Interacts (via PH domain) with TEK/TIE2 (tyrosine phosphorylated). In terms of processing, on immunoreceptor stimulation, phosphorylated on C-terminal tyrosine residues. Phosphorylation on Tyr-346 is required for binding to the SH2 domain of NCK. Phosphorylation on both Tyr-271 and Tyr-300 is required for interaction with RASGAP. Phosphorylated on tyrosine residues by TEK/TIE2.

Functionally, DOK proteins are enzymatically inert adaptor or scaffolding proteins. They provide a docking platform for the assembly of multimolecular signaling complexes. DOK2 may modulate the cellular proliferation induced by IL-4, as well as IL-2 and IL-3. May be involved in modulating Bcr-Abl signaling. Attenuates EGF-stimulated MAP kinase activation. The sequence is that of Docking protein 2 (DOK2) from Bos taurus (Bovine).